Consider the following 161-residue polypeptide: Endoribonuclease YbeY (161 aa).

Zn(2+) is bound by residues H120, H124, and H130.

It belongs to the endoribonuclease YbeY family. Zn(2+) is required as a cofactor.

The protein resides in the cytoplasm. Its function is as follows. Single strand-specific metallo-endoribonuclease involved in late-stage 70S ribosome quality control and in maturation of the 3' terminus of the 16S rRNA. This Erythrobacter litoralis (strain HTCC2594) protein is Endoribonuclease YbeY.